We begin with the raw amino-acid sequence, 225 residues long: Uridylate kinase (225 aa).

Asp-6 contributes to the Mg(2+) binding site. Position 9–10 (9–10 (GS)) interacts with ATP. Residue Gly-44 coordinates UMP. ATP is bound by residues Gly-45 and Arg-49. Residues Asp-66 and 114 to 120 (THPGHTT) contribute to the UMP site. The Mg(2+) site is built by Thr-120 and Asp-121. Residues Thr-140, Asn-141, Tyr-146, and Asp-149 each coordinate ATP. A UMP-binding site is contributed by Gly-179. Ser-182 is a binding site for Mg(2+). Residue Ser-182 coordinates ATP.

It belongs to the UMP kinase family. Homohexamer; trimer of dimers.

It is found in the cytoplasm. It carries out the reaction UMP + ATP = UDP + ADP. Its pathway is pyrimidine metabolism; CTP biosynthesis via de novo pathway; UDP from UMP (UMPK route): step 1/1. Inhibited by UTP. In terms of biological role, catalyzes the reversible phosphorylation of UMP to UDP, with ATP as the most efficient phosphate donor. In Pyrococcus furiosus (strain ATCC 43587 / DSM 3638 / JCM 8422 / Vc1), this protein is Uridylate kinase (pyrH).